The following is a 147-amino-acid chain: Hemoglobin subunit epsilon (147 aa).

One can recognise a Globin domain in the interval 3-147 (HWSAEEKQLI…VAHALPRKYH (145 aa)). His-64 and His-93 together coordinate heme b.

This sequence belongs to the globin family. In terms of assembly, heterotetramer of two epsilon chains and two alpha chains. As to expression, red blood cells.

Its function is as follows. Beta-type chain found in early embryos. The chain is Hemoglobin subunit epsilon (HBE) from Cairina moschata (Muscovy duck).